Here is a 578-residue protein sequence, read N- to C-terminus: Arginine--tRNA ligase (578 aa).

The 'HIGH' region signature appears at 127-137 (PNLAKEMHVGH).

Belongs to the class-I aminoacyl-tRNA synthetase family. As to quaternary structure, monomer.

It is found in the cytoplasm. It catalyses the reaction tRNA(Arg) + L-arginine + ATP = L-arginyl-tRNA(Arg) + AMP + diphosphate. The protein is Arginine--tRNA ligase of Pseudomonas entomophila (strain L48).